A 645-amino-acid polypeptide reads, in one-letter code: Phosphomethylpyrimidine synthase (645 aa).

Positions 1–12 (MSHNTVIPTTDI) are enriched in polar residues. Residues 1–25 (MSHNTVIPTTDISPKPDPARPRKAQ) form a disordered region. Residues N253, M282, Y311, H347, 367-369 (SRG), 408-411 (DGLR), and E447 contribute to the substrate site. H451 is a Zn(2+) binding site. Substrate is bound at residue Y474. H515 provides a ligand contact to Zn(2+). Residues C595, C598, and C603 each contribute to the [4Fe-4S] cluster site.

Belongs to the ThiC family. In terms of assembly, homodimer. Requires [4Fe-4S] cluster as cofactor.

The catalysed reaction is 5-amino-1-(5-phospho-beta-D-ribosyl)imidazole + S-adenosyl-L-methionine = 4-amino-2-methyl-5-(phosphooxymethyl)pyrimidine + CO + 5'-deoxyadenosine + formate + L-methionine + 3 H(+). Its pathway is cofactor biosynthesis; thiamine diphosphate biosynthesis. Functionally, catalyzes the synthesis of the hydroxymethylpyrimidine phosphate (HMP-P) moiety of thiamine from aminoimidazole ribotide (AIR) in a radical S-adenosyl-L-methionine (SAM)-dependent reaction. This is Phosphomethylpyrimidine synthase from Photorhabdus laumondii subsp. laumondii (strain DSM 15139 / CIP 105565 / TT01) (Photorhabdus luminescens subsp. laumondii).